The sequence spans 328 residues: Pleckstrin homology domain protein OPY1 (328 aa).

Residues 19 to 52 (NLIKKPSTSQNKTPTAQSSSGNNGAADGAPQGYH) form a disordered region. Residues 24-41 (PSTSQNKTPTAQSSSGNN) show a composition bias toward polar residues. Positions 213-328 (AEHQVCSGIL…IRKKLKAENI (116 aa)) are required for targeting to the cell membrane. In terms of domain architecture, PH spans 215-318 (HQVCSGILYT…WIINFKSGIL (104 aa)).

As to quaternary structure, interacts with MSS4 (via N-terminus); to negatively regulate MSS4 kinase activity.

Its subcellular location is the cell membrane. It is found in the cytoplasm. Functionally, binds phosphatidylinositol 4,5-bisphosphate (PtdIns(4,5)P2/PIP2) at the cell membrane. Negatively regulates the activity of phosphatidylinositol 4-phosphate 5-kinase MSS4. The sequence is that of Pleckstrin homology domain protein OPY1 (OPY1) from Saccharomyces cerevisiae (strain ATCC 204508 / S288c) (Baker's yeast).